Reading from the N-terminus, the 196-residue chain is Protease (196 aa).

Active-site residues include histidine 54, aspartate 70, and cysteine 121.

It belongs to the peptidase C5 family. As to quaternary structure, interacts with protease cofactor pVI-C; this interaction is necessary for protease activation.

The protein localises to the virion. It is found in the host nucleus. It carries out the reaction Cleaves proteins of the adenovirus and its host cell at two consensus sites: -Yaa-Xaa-Gly-Gly-|-Xaa- and -Yaa-Xaa-Gly-Xaa-|-Gly- (in which Yaa is Met, Ile or Leu, and Xaa is any amino acid).. Requires DNA and protease cofactor for maximal activation. Inside nascent virions, becomes partially activated by binding to the viral DNA, allowing it to cleave the cofactor that binds to the protease and fully activates it. Actin, like the viral protease cofactor, seems to act as a cofactor in the cleavage of cytokeratin 18 and of actin itself. Functionally, cleaves viral precursor proteins (pTP, pIIIa, pVI, pVII, pVIII, and pX) inside newly assembled particles giving rise to mature virions. Protease complexed to its cofactor slides along the viral DNA to specifically locate and cleave the viral precursors. Mature virions have a weakened organization compared to the unmature virions, thereby facilitating subsequent uncoating. Without maturation, the particle lacks infectivity and is unable to uncoat. Late in adenovirus infection, in the cytoplasm, may participate in the cytoskeleton destruction. Cleaves host cell cytoskeletal keratins K7 and K18. In Bos taurus (Bovine), this protein is Protease.